The sequence spans 209 residues: Large ribosomal subunit protein uL3 (209 aa).

Residues 133–153 (THGNSLSHRVPGSIGQNQTPG) are disordered. Gln150 is subject to N5-methylglutamine.

This sequence belongs to the universal ribosomal protein uL3 family. Part of the 50S ribosomal subunit. Forms a cluster with proteins L14 and L19. In terms of processing, methylated by PrmB.

Functionally, one of the primary rRNA binding proteins, it binds directly near the 3'-end of the 23S rRNA, where it nucleates assembly of the 50S subunit. This is Large ribosomal subunit protein uL3 from Serratia proteamaculans (strain 568).